Here is a 369-residue protein sequence, read N- to C-terminus: Glutamate 5-kinase (369 aa).

Lys8 contributes to the ATP binding site. 3 residues coordinate substrate: Ser49, Asp136, and Asn148. ATP-binding positions include 168–169 and 211–217; these read TD and TGGMATK. In terms of domain architecture, PUA spans 276 to 354; that stretch reads KGELWLDEGA…TELANILGYA (79 aa).

Belongs to the glutamate 5-kinase family.

Its subcellular location is the cytoplasm. It catalyses the reaction L-glutamate + ATP = L-glutamyl 5-phosphate + ADP. The protein operates within amino-acid biosynthesis; L-proline biosynthesis; L-glutamate 5-semialdehyde from L-glutamate: step 1/2. Functionally, catalyzes the transfer of a phosphate group to glutamate to form L-glutamate 5-phosphate. The sequence is that of Glutamate 5-kinase from Thermosynechococcus vestitus (strain NIES-2133 / IAM M-273 / BP-1).